A 156-amino-acid polypeptide reads, in one-letter code: Small ribosomal subunit protein uS7 (156 aa).

Belongs to the universal ribosomal protein uS7 family. As to quaternary structure, part of the 30S ribosomal subunit. Contacts proteins S9 and S11.

Functionally, one of the primary rRNA binding proteins, it binds directly to 16S rRNA where it nucleates assembly of the head domain of the 30S subunit. Is located at the subunit interface close to the decoding center, probably blocks exit of the E-site tRNA. This Campylobacter jejuni subsp. jejuni serotype O:6 (strain 81116 / NCTC 11828) protein is Small ribosomal subunit protein uS7.